A 172-amino-acid polypeptide reads, in one-letter code: 3-hydroxydecanoyl-[acyl-carrier-protein] dehydratase (172 aa).

H71 is a catalytic residue.

The protein belongs to the thioester dehydratase family. FabA subfamily. As to quaternary structure, homodimer.

It is found in the cytoplasm. It carries out the reaction a (3R)-hydroxyacyl-[ACP] = a (2E)-enoyl-[ACP] + H2O. It catalyses the reaction (3R)-hydroxydecanoyl-[ACP] = (2E)-decenoyl-[ACP] + H2O. The catalysed reaction is (2E)-decenoyl-[ACP] = (3Z)-decenoyl-[ACP]. It functions in the pathway lipid metabolism; fatty acid biosynthesis. Functionally, necessary for the introduction of cis unsaturation into fatty acids. Catalyzes the dehydration of (3R)-3-hydroxydecanoyl-ACP to E-(2)-decenoyl-ACP and then its isomerization to Z-(3)-decenoyl-ACP. Can catalyze the dehydratase reaction for beta-hydroxyacyl-ACPs with saturated chain lengths up to 16:0, being most active on intermediate chain length. In Sodalis glossinidius (strain morsitans), this protein is 3-hydroxydecanoyl-[acyl-carrier-protein] dehydratase.